The primary structure comprises 953 residues: Valine--tRNA ligase (953 aa).

The 'HIGH' region motif lies at 42–52 (PNVTGSLHMGH). Residues 554 to 558 (KMSKS) carry the 'KMSKS' region motif. Lys557 contacts ATP. Residues 884-953 (LIDKDAELAR…EAQKETIAAL (70 aa)) adopt a coiled-coil conformation.

Belongs to the class-I aminoacyl-tRNA synthetase family. ValS type 1 subfamily. As to quaternary structure, monomer.

Its subcellular location is the cytoplasm. The catalysed reaction is tRNA(Val) + L-valine + ATP = L-valyl-tRNA(Val) + AMP + diphosphate. Functionally, catalyzes the attachment of valine to tRNA(Val). As ValRS can inadvertently accommodate and process structurally similar amino acids such as threonine, to avoid such errors, it has a 'posttransfer' editing activity that hydrolyzes mischarged Thr-tRNA(Val) in a tRNA-dependent manner. This Photobacterium profundum (strain SS9) protein is Valine--tRNA ligase.